Here is an 811-residue protein sequence, read N- to C-terminus: Leucine--tRNA ligase (811 aa).

The 'HIGH' region motif lies at 38–49; that stretch reads SYPSGSNLHAGH. A 'KMSKS' region motif is present at residues 570-574; sequence KMSKS. An ATP-binding site is contributed by Lys573.

The protein belongs to the class-I aminoacyl-tRNA synthetase family.

It is found in the cytoplasm. It carries out the reaction tRNA(Leu) + L-leucine + ATP = L-leucyl-tRNA(Leu) + AMP + diphosphate. The sequence is that of Leucine--tRNA ligase from Clostridium kluyveri (strain ATCC 8527 / DSM 555 / NBRC 12016 / NCIMB 10680 / K1).